The chain runs to 379 residues: 1-deoxy-D-xylulose 5-phosphate reductoisomerase (379 aa).

Positions 10, 11, 12, 13, 38, 39, and 121 each coordinate NADPH. Lysine 122 serves as a coordination point for 1-deoxy-D-xylulose 5-phosphate. Residue glutamate 123 coordinates NADPH. Aspartate 147 serves as a coordination point for Mn(2+). Residues serine 148, glutamate 149, serine 173, and histidine 196 each coordinate 1-deoxy-D-xylulose 5-phosphate. Glutamate 149 provides a ligand contact to Mn(2+). Glycine 202 lines the NADPH pocket. Residues serine 209, asparagine 214, lysine 215, and glutamate 218 each coordinate 1-deoxy-D-xylulose 5-phosphate. Residue glutamate 218 coordinates Mn(2+).

This sequence belongs to the DXR family. It depends on Mg(2+) as a cofactor. Mn(2+) is required as a cofactor.

The enzyme catalyses 2-C-methyl-D-erythritol 4-phosphate + NADP(+) = 1-deoxy-D-xylulose 5-phosphate + NADPH + H(+). It participates in isoprenoid biosynthesis; isopentenyl diphosphate biosynthesis via DXP pathway; isopentenyl diphosphate from 1-deoxy-D-xylulose 5-phosphate: step 1/6. In terms of biological role, catalyzes the NADPH-dependent rearrangement and reduction of 1-deoxy-D-xylulose-5-phosphate (DXP) to 2-C-methyl-D-erythritol 4-phosphate (MEP). This is 1-deoxy-D-xylulose 5-phosphate reductoisomerase from Chlamydia muridarum (strain MoPn / Nigg).